A 286-amino-acid chain; its full sequence is MEPKETLRQRWPGRGRTEETGAMKKSDDAPAVMTVEHLNMYYGSFMALKDVSMVIRKNRITALIGPSGCGKSTFIRSLNRMHEIVPGARVEGRVTLDGEDIYAPEVDPVRVRRRVGMVFQKPNPFPTMSIYDNVIAGLKLGRKRKKSELDEIVERTLRQAALWDEVKNKLSESGTSLSGGQQQRLCIARTLALEPEVILMDEPASALDPVSTQKIEDAMLELKEQYTVVIVTHNMQQAARVSDYTGFFFIEDMGQPGQLWEFGETEKIFSNPDRKETEDYVTGRFG.

A disordered region spans residues 1 to 27 (MEPKETLRQRWPGRGRTEETGAMKKSD). Residues 15–27 (GRTEETGAMKKSD) show a composition bias toward basic and acidic residues. In terms of domain architecture, ABC transporter spans 33–281 (MTVEHLNMYY…PDRKETEDYV (249 aa)). 65–72 (GPSGCGKS) lines the ATP pocket.

The protein belongs to the ABC transporter superfamily. Phosphate importer (TC 3.A.1.7) family. As to quaternary structure, the complex is composed of two ATP-binding proteins (PstB), two transmembrane proteins (PstC and PstA) and a solute-binding protein (PstS).

Its subcellular location is the cell membrane. It carries out the reaction phosphate(out) + ATP + H2O = ADP + 2 phosphate(in) + H(+). Part of the ABC transporter complex PstSACB involved in phosphate import. Responsible for energy coupling to the transport system. This is Phosphate import ATP-binding protein PstB from Rubrobacter xylanophilus (strain DSM 9941 / JCM 11954 / NBRC 16129 / PRD-1).